We begin with the raw amino-acid sequence, 312 residues long: DNA-directed RNA polymerase subunit alpha (312 aa).

Residues 1-226 form an alpha N-terminal domain (alpha-NTD) region; that stretch reads MIEFEKPIIT…EHLNLFTDLT (226 aa). The segment at 242-312 is alpha C-terminal domain (alpha-CTD); that stretch reads NDEKVLDRTI…DLGLGLKNDK (71 aa).

The protein belongs to the RNA polymerase alpha chain family. As to quaternary structure, homodimer. The RNAP catalytic core consists of 2 alpha, 1 beta, 1 beta' and 1 omega subunit. When a sigma factor is associated with the core the holoenzyme is formed, which can initiate transcription.

The enzyme catalyses RNA(n) + a ribonucleoside 5'-triphosphate = RNA(n+1) + diphosphate. In terms of biological role, DNA-dependent RNA polymerase catalyzes the transcription of DNA into RNA using the four ribonucleoside triphosphates as substrates. The sequence is that of DNA-directed RNA polymerase subunit alpha from Streptococcus agalactiae serotype Ia (strain ATCC 27591 / A909 / CDC SS700).